Reading from the N-terminus, the 833-residue chain is Leucine--tRNA ligase (833 aa).

A 'HIGH' region motif is present at residues 41-52 (PYPSGAGLHVGH). Residues 610–614 (KMSKS) carry the 'KMSKS' region motif. Lysine 613 provides a ligand contact to ATP.

The protein belongs to the class-I aminoacyl-tRNA synthetase family.

Its subcellular location is the cytoplasm. It carries out the reaction tRNA(Leu) + L-leucine + ATP = L-leucyl-tRNA(Leu) + AMP + diphosphate. The sequence is that of Leucine--tRNA ligase from Streptococcus mutans serotype c (strain ATCC 700610 / UA159).